The primary structure comprises 138 residues: ATP synthase epsilon chain (138 aa).

Belongs to the ATPase epsilon chain family. F-type ATPases have 2 components, CF(1) - the catalytic core - and CF(0) - the membrane proton channel. CF(1) has five subunits: alpha(3), beta(3), gamma(1), delta(1), epsilon(1). CF(0) has three main subunits: a, b and c.

The protein resides in the cell inner membrane. Produces ATP from ADP in the presence of a proton gradient across the membrane. The sequence is that of ATP synthase epsilon chain from Geotalea daltonii (strain DSM 22248 / JCM 15807 / FRC-32) (Geobacter daltonii).